Here is a 1052-residue protein sequence, read N- to C-terminus: Focal adhesion kinase 1 (1052 aa).

A disordered region spans residues 1 to 27; the sequence is MAAAYLDPNLNHTPSSSTKTHLGTGME. Ala2 bears the N-acetylalanine mark. Tyr5 is modified (phosphotyrosine). Residues 10 to 21 are compositionally biased toward polar residues; sequence LNHTPSSSTKTH. Thr13 carries the post-translational modification Phosphothreonine. Ser29 and Ser54 each carry phosphoserine. One can recognise an FERM domain in the interval 35–355; it reads RVLKVFHYFE…GYCRLVNGAT (321 aa). A Glycyl lysine isopeptide (Lys-Gly) (interchain with G-Cter in SUMO) cross-link involves residue Lys152. Phosphotyrosine is present on residues Tyr397 and Tyr407. Tyr397 carries the post-translational modification Phosphotyrosine; by autocatalysis. ATP contacts are provided by residues 428–434, Lys454, and 500–502; these read IGEGQFG and ELC. A Protein kinase domain is found at 431–680; it reads GQFGDVHQGV…ELKAQLSTIL (250 aa). Asp546 (proton acceptor) is an active-site residue. Tyr570 is modified (phosphotyrosine). Phosphotyrosine; by RET and SRC occurs at positions 576 and 577. Ser580 is modified (phosphoserine). The span at 685 to 697 shows a compositional bias: basic and acidic residues; that stretch reads VQQEERMRMESRR. 2 disordered regions span residues 685 to 734 and 837 to 921; these read VQQE…PSPQ and VRLS…DRSN. The interaction with TGFB1I1 stretch occupies residues 707–1052; it reads GSDEAPPKPS…LKMLGQTRPH (346 aa). Ser722 carries the post-translational modification Phosphoserine. At Ser732 the chain carries Phosphoserine; by CDK5. A compositionally biased stretch (basic and acidic residues) spans 837-849; that stretch reads VRLSRGSIDREDG. Phosphoserine is present on Ser843. A Phosphotyrosine modification is found at Tyr861. Over residues 869 to 880 the composition is skewed to pro residues; sequence PAAPPKKPPRPG. The span at 886 to 896 shows a compositional bias: polar residues; it reads SNLSSISSPAD. Phosphoserine is present on Ser910. The interaction with ARHGEF28 stretch occupies residues 912 to 1052; that stretch reads PPTANLDRSN…LKMLGQTRPH (141 aa). Residue Thr914 is modified to Phosphothreonine. At Tyr925 the chain carries Phosphotyrosine; by SRC.

The protein belongs to the protein kinase superfamily. Tyr protein kinase family. FAK subfamily. In terms of assembly, interacts with GIT1. Component of a complex that contains at least FER, CTTN and PTK2/FAK1. Interacts with BMX. Interacts with STEAP4. Interacts with ZFYVE21. Interacts with ESR1. Interacts with FGR, FLT4 and RET. Interacts with EPHA2 in resting cells; activation of EPHA2 recruits PTPN11, leading to dephosphorylation of PTK2/FAK1 and dissociation of the complex. Interacts with EPHA1 (kinase activity-dependent). Interacts with MISP. Interacts with PIAS1. Interacts with ARHGAP26 and SHC1. Interacts with RB1CC1; this inhibits PTK2/FAK1 activity and activation of downstream signaling pathways. Interacts with P53/TP53. Interacts with STAT1. Interacts with WASL. Interacts with ARHGEF7. Interacts with DCC. Interacts (via first Pro-rich region) with CAS family members (via SH3 domain), including BCAR1, BCAR3 and CASS4. Interacts with NEDD9 (via C-terminus). Interacts with SORBS1. Interacts with ARHGEF28. Interacts with SHB. Part of a complex composed of THSD1, PTK2/FAK1, TLN1 and VCL. Interacts with PXN and TLN1. Interacts with TGFB1I1. Interacts with PIK3R1 or PIK3R2. Interacts with SRC, GRB2 and GRB7. Interacts with LPXN (via LD motif 3). Interacts with CD36. Interacts with EMP2; regulates PTK2 activation and localization. Interacts with DSCAM. Interacts with AMBRA1. Interacts (when tyrosine-phosphorylated) with tensin TNS1; the interaction is increased by phosphorylation of TNS1. In terms of processing, phosphorylated on tyrosine residues upon activation, e.g. upon integrin signaling. Tyr-397 is the major autophosphorylation site, but other kinases can also phosphorylate this residue. Phosphorylation at Tyr-397 promotes interaction with SRC and SRC family members, leading to phosphorylation at Tyr-576, Tyr-577 and at additional tyrosine residues. FGR promotes phosphorylation at Tyr-397 and Tyr-576. FER promotes phosphorylation at Tyr-577, Tyr-861 and Tyr-925, even when cells are not adherent. Tyr-397, Tyr-576 and Ser-722 are phosphorylated only when cells are adherent. Phosphorylation at Tyr-397 is important for interaction with BMX, PIK3R1 and SHC1. Phosphorylation at Tyr-925 is important for interaction with GRB2. Dephosphorylated by PTPN11; PTPN11 is recruited to PTK2 via EPHA2 (tyrosine phosphorylated). Microtubule-induced dephosphorylation at Tyr-397 is crucial for the induction of focal adhesion disassembly; this dephosphorylation could be catalyzed by PTPN11 and regulated by ZFYVE21. Phosphorylation on tyrosine residues is enhanced by NTN1. Post-translationally, sumoylated; this enhances autophosphorylation.

The protein resides in the cell junction. The protein localises to the focal adhesion. It is found in the cell membrane. Its subcellular location is the cytoplasm. It localises to the perinuclear region. The protein resides in the cell cortex. The protein localises to the cytoskeleton. It is found in the microtubule organizing center. Its subcellular location is the centrosome. It localises to the nucleus. The protein resides in the cilium basal body. It catalyses the reaction L-tyrosyl-[protein] + ATP = O-phospho-L-tyrosyl-[protein] + ADP + H(+). With respect to regulation, subject to autoinhibition, mediated by interactions between the FERM domain and the kinase domain. Activated by autophosphorylation at Tyr-397. This promotes interaction with SRC and phosphorylation at Tyr-576 and Tyr-577 in the kinase activation loop by SRC. Phosphorylation at Tyr-397, Tyr-576 and Tyr-577 is required for maximal kinase activity. In terms of biological role, non-receptor protein-tyrosine kinase that plays an essential role in regulating cell migration, adhesion, spreading, reorganization of the actin cytoskeleton, formation and disassembly of focal adhesions and cell protrusions, cell cycle progression, cell proliferation and apoptosis. Required for early embryonic development and placenta development. Required for embryonic angiogenesis, normal cardiomyocyte migration and proliferation, and normal heart development. Regulates axon growth and neuronal cell migration, axon branching and synapse formation; required for normal development of the nervous system. Plays a role in osteogenesis and differentiation of osteoblasts. Functions in integrin signal transduction, but also in signaling downstream of numerous growth factor receptors, G-protein coupled receptors (GPCR), EPHA2, netrin receptors and LDL receptors. Forms multisubunit signaling complexes with SRC and SRC family members upon activation; this leads to the phosphorylation of additional tyrosine residues, creating binding sites for scaffold proteins, effectors and substrates. Regulates numerous signaling pathways. Promotes activation of phosphatidylinositol 3-kinase and the AKT1 signaling cascade. Promotes activation of MAPK1/ERK2, MAPK3/ERK1 and the MAP kinase signaling cascade. Promotes localized and transient activation of guanine nucleotide exchange factors (GEFs) and GTPase-activating proteins (GAPs), and thereby modulates the activity of Rho family GTPases. Signaling via CAS family members mediates activation of RAC1. Phosphorylates NEDD9 following integrin stimulation. Recruits the ubiquitin ligase MDM2 to P53/TP53 in the nucleus, and thereby regulates P53/TP53 activity, P53/TP53 ubiquitination and proteasomal degradation. Phosphorylates SRC; this increases SRC kinase activity. Phosphorylates ACTN1, ARHGEF7, GRB7, RET and WASL. Promotes phosphorylation of PXN and STAT1; most likely PXN and STAT1 are phosphorylated by a SRC family kinase that is recruited to autophosphorylated PTK2/FAK1, rather than by PTK2/FAK1 itself. Promotes phosphorylation of BCAR1; GIT2 and SHC1; this requires both SRC and PTK2/FAK1. Promotes phosphorylation of BMX and PIK3R1. Does not contain a kinase domain and inhibits PTK2/FAK1 phosphorylation and signaling. Its enhanced expression can attenuate the nuclear accumulation of LPXN and limit its ability to enhance serum response factor (SRF)-dependent gene transcription. In Mus musculus (Mouse), this protein is Focal adhesion kinase 1.